The primary structure comprises 394 residues: Elongation factor Tu 1 (394 aa).

One can recognise a tr-type G domain in the interval 10–204; the sequence is KPHVNVGTIG…FLDSYIPEPE (195 aa). The segment at 19–26 is G1; that stretch reads GHVDHGKT. 19–26 provides a ligand contact to GTP; the sequence is GHVDHGKT. A Mg(2+)-binding site is contributed by T26. Positions 60–64 are G2; the sequence is GITIN. A G3 region spans residues 81-84; sequence DCPG. Residues 81–85 and 136–139 each bind GTP; these read DCPGH and NKCD. Residues 136-139 are G4; it reads NKCD. Positions 174-176 are G5; it reads SAL.

Belongs to the TRAFAC class translation factor GTPase superfamily. Classic translation factor GTPase family. EF-Tu/EF-1A subfamily. In terms of assembly, monomer.

The protein resides in the cytoplasm. The catalysed reaction is GTP + H2O = GDP + phosphate + H(+). GTP hydrolase that promotes the GTP-dependent binding of aminoacyl-tRNA to the A-site of ribosomes during protein biosynthesis. In Shigella sonnei (strain Ss046), this protein is Elongation factor Tu 1.